We begin with the raw amino-acid sequence, 139 residues long: ATP synthase epsilon chain, chloroplastic (139 aa).

It belongs to the ATPase epsilon chain family. As to quaternary structure, F-type ATPases have 2 components, CF(1) - the catalytic core - and CF(0) - the membrane proton channel. CF(1) has five subunits: alpha(3), beta(3), gamma(1), delta(1), epsilon(1). CF(0) has three main subunits: a, b and c.

It localises to the plastid. Its subcellular location is the chloroplast thylakoid membrane. Functionally, produces ATP from ADP in the presence of a proton gradient across the membrane. The chain is ATP synthase epsilon chain, chloroplastic from Dictyota dichotoma.